The primary structure comprises 256 residues: Small ribosomal subunit protein eS1 (256 aa).

The segment covering 1-18 (MAVGKNKRLSKGKKGLKK) has biased composition (basic residues). Residues 1 to 22 (MAVGKNKRLSKGKKGLKKKTQD) are disordered. The residue at position 2 (alanine 2) is an N-acetylalanine; partial.

This sequence belongs to the eukaryotic ribosomal protein eS1 family. Component of the small ribosomal subunit. Mature ribosomes consist of a small (40S) and a large (60S) subunit. The 40S subunit contains about 33 different proteins and 1 molecule of RNA (18S). The 60S subunit contains about 49 different proteins and 3 molecules of RNA (25S, 5.8S and 5S).

Its subcellular location is the cytoplasm. The protein is Small ribosomal subunit protein eS1 of Pyricularia oryzae (strain Y34) (Rice blast fungus).